A 458-amino-acid polypeptide reads, in one-letter code: Exodeoxyribonuclease 7 large subunit (458 aa).

This sequence belongs to the XseA family. In terms of assembly, heterooligomer composed of large and small subunits.

It localises to the cytoplasm. It carries out the reaction Exonucleolytic cleavage in either 5'- to 3'- or 3'- to 5'-direction to yield nucleoside 5'-phosphates.. In terms of biological role, bidirectionally degrades single-stranded DNA into large acid-insoluble oligonucleotides, which are then degraded further into small acid-soluble oligonucleotides. The chain is Exodeoxyribonuclease 7 large subunit from Geobacter sp. (strain M21).